Consider the following 533-residue polypeptide: MPAKDKRKDKRKDKRKGKNKGKEPKKIIKSDEPAIERAKANASLWEARLEVTELSRIEYRDTSRRLAKNNEDLKKQQYNMEKDIMSVLSYLKKQDQEKDNMIEKLKQQLAKTKEKAQEEKEKLEQKYALQVSELEGQFHQKAKEIGMIQTELKTIKQFQKRKIQVEKELDDLKENLRNSEKNYQETLRRLESRFFEEKHRLEQEAEKRIIMLAERAHHEAVVQLNTAGRNVFKENVYLHKALAYHLKEAEILQQNSKKIEENHSCLLQQKEINDLLVKEKIMQLTQQKSQIQTLQKKVVSLENALTYMTTEFEAEVLKLQQKAIIENQAGLVEIDKLQQLLQMKDREMNRVKRLAKNILDERTEVEQFFLDALYEVKQQILASRKHYKQIAQAAFNLKMRAACAGKTEYPRIRTFDGKEQSTNSVNQDLLEAEKWPTTQKNVDIRDLTWEQKEKVLRLLFAKMNGFAARKYSQSSKPPVPDHIIYGSGEMKETGDENNLLDQTFITQQAPVSDSNRMVSPDVIPQGLQDSDIA.

Residues 1 to 30 (MPAKDKRKDKRKDKRKGKNKGKEPKKIIKS) form a disordered region. Basic residues predominate over residues 7–19 (RKDKRKDKRKGKN). The segment covering 20 to 30 (KGKEPKKIIKS) has biased composition (basic and acidic residues). 2 coiled-coil regions span residues 34–207 (AIER…EAEK) and 246–368 (LKEA…VEQF). The interval 277–533 (VKEKIMQLTQ…PQGLQDSDIA (257 aa)) is interaction with MNS1 and ODF2. Residues 507 to 517 (QQAPVSDSNRM) show a composition bias toward polar residues. A disordered region spans residues 507–533 (QQAPVSDSNRMVSPDVIPQGLQDSDIA).

The protein belongs to the BBOF1 family. Interacts with MNS1 and ODF2. Expressed exclusively in the testis and predominantly expressed in male germ cells.

It is found in the cytoplasm. Its subcellular location is the cytoskeleton. The protein localises to the cilium basal body. The protein resides in the flagellum axoneme. In terms of biological role, plays an essential role in sperm motility and male fertility by stabilizing the sperm flagellar axonemal structure. May be required for the stability of ODF2 and MANS1 proteins. Dispensable for the assembly and function of motile cilia. The sequence is that of Basal body-orientation factor 1 from Mus musculus (Mouse).